Here is a 421-residue protein sequence, read N- to C-terminus: 3-phosphoshikimate 1-carboxyvinyltransferase (421 aa).

3-phosphoshikimate-binding residues include Lys-21, Ser-22, and Arg-26. Phosphoenolpyruvate is bound at residue Lys-21. 2 residues coordinate phosphoenolpyruvate: Gly-93 and Arg-121. Residues Ser-166, Ser-167, Gln-168, Ser-194, Asp-310, and Lys-337 each coordinate 3-phosphoshikimate. Gln-168 provides a ligand contact to phosphoenolpyruvate. Residue Asp-310 is the Proton acceptor of the active site. Phosphoenolpyruvate contacts are provided by Arg-341, Arg-382, and Lys-407.

The protein belongs to the EPSP synthase family. In terms of assembly, monomer.

The protein localises to the cytoplasm. The enzyme catalyses 3-phosphoshikimate + phosphoenolpyruvate = 5-O-(1-carboxyvinyl)-3-phosphoshikimate + phosphate. It participates in metabolic intermediate biosynthesis; chorismate biosynthesis. Its function is as follows. Catalyzes the transfer of the enolpyruvyl moiety of phosphoenolpyruvate (PEP) to the 5-hydroxyl of shikimate-3-phosphate (S3P) to produce enolpyruvyl shikimate-3-phosphate and inorganic phosphate. This chain is 3-phosphoshikimate 1-carboxyvinyltransferase, found in Methanoregula boonei (strain DSM 21154 / JCM 14090 / 6A8).